Reading from the N-terminus, the 321-residue chain is Glyoxylate/hydroxypyruvate reductase B (321 aa).

Catalysis depends on residues Arg-237 and Glu-266. The active-site Proton donor is His-285.

This sequence belongs to the D-isomer specific 2-hydroxyacid dehydrogenase family. GhrB subfamily. Homodimer.

It is found in the cytoplasm. The enzyme catalyses glycolate + NADP(+) = glyoxylate + NADPH + H(+). It catalyses the reaction (R)-glycerate + NAD(+) = 3-hydroxypyruvate + NADH + H(+). The catalysed reaction is (R)-glycerate + NADP(+) = 3-hydroxypyruvate + NADPH + H(+). Its function is as follows. Catalyzes the NADPH-dependent reduction of glyoxylate and hydroxypyruvate into glycolate and glycerate, respectively. The protein is Glyoxylate/hydroxypyruvate reductase B of Erwinia tasmaniensis (strain DSM 17950 / CFBP 7177 / CIP 109463 / NCPPB 4357 / Et1/99).